Here is an 800-residue protein sequence, read N- to C-terminus: Putative antiporter subunit mnhA2 (800 aa).

20 helical membrane passes run 1–21, 33–53, 78–98, 118–138, 167–187, 207–227, 241–261, 273–293, 300–320, 331–351, 387–407, 424–444, 472–492, 527–547, 595–615, 627–647, 651–671, 676–696, 712–732, and 768–788; these read MSLV…LLMS, IALV…PSVA, GLSL…FFYA, LFMF…MYIF, FMIT…LYIM, GLFI…SAQF, TPVS…FLLL, YVYI…ITAL, GILA…VGIG, IASI…NHAI, LVMT…GFLS, FSLI…VFTF, PWLF…IFFV, GFNI…VLAI, IIMT…RIGL, GALE…LIFI, LTMV…FIAM, LALT…VSFS, IIKI…IFIT, and LDTL…YTLL.

It belongs to the CPA3 antiporters (TC 2.A.63) subunit A family. May form a heterooligomeric complex that consists of seven subunits: mnhA2, mnhB2, mnhC2, mnhD2, mnhE2, mnhF2 and mnhG2.

It localises to the cell membrane. The chain is Putative antiporter subunit mnhA2 (mnhA2) from Staphylococcus aureus (strain USA300).